Reading from the N-terminus, the 554-residue chain is Potassium/proton antiporter CemA (554 aa).

The helical transmembrane segment at 50–70 (SLFVVLFIPFFINIFTKIYVF) threads the bilayer. The interval 113–410 (KTENFFPEKP…VPYNFNKNTE (298 aa)) is insert. 3 helical membrane-spanning segments follow: residues 429–449 (ISAITNLLADFMGLFILLFLL), 479–499 (MLLFTDLLVGFHSPRGWEVIF), and 514–534 (IIFLLVGTFPVLLDALFKYWI).

This sequence belongs to the CemA family.

The protein resides in the plastid. It is found in the chloroplast inner membrane. It carries out the reaction K(+)(in) + H(+)(out) = K(+)(out) + H(+)(in). Functionally, contributes to K(+)/H(+) antiport activity by supporting proton efflux to control proton extrusion and homeostasis in chloroplasts in a light-dependent manner to modulate photosynthesis. Prevents excessive induction of non-photochemical quenching (NPQ) under continuous-light conditions. Indirectly promotes efficient inorganic carbon uptake into chloroplasts. This is Potassium/proton antiporter CemA from Stigeoclonium helveticum (Green alga).